The chain runs to 44 residues: Protein PsbN (44 aa).

The helical transmembrane segment at 7-29 (FFTTFLGCLLLSITGYSIYVGFG) threads the bilayer.

The protein belongs to the PsbN family.

It localises to the plastid. The protein localises to the chloroplast thylakoid membrane. May play a role in photosystem I and II biogenesis. In Pleurastrum terricola (Filamentous green alga), this protein is Protein PsbN.